Consider the following 392-residue polypeptide: [Phe13]-bombesin receptor (392 aa).

The Extracellular portion of the chain corresponds to 1 to 40 (MPEGFQSLNQTLPSAISSIAHLESLNDSFILGAKQSEDVS). N-linked (GlcNAc...) asparagine glycans are attached at residues asparagine 9 and asparagine 26. The chain crosses the membrane as a helical span at residues 41–62 (PGLEILALISVTYAVIISVGIL). At 63–81 (GNTILIKVFFKIKSMQTVP) the chain is on the cytoplasmic side. The helical transmembrane segment at 82-102 (NIFITSLAFGDLLLLLTCVPV) threads the bilayer. At 103-120 (DASRYIVDTWMFGRAGCK) the chain is on the extracellular side. Residues cysteine 119 and cysteine 202 are joined by a disulfide bond. The helical transmembrane segment at 121-142 (IISFIQLTSVGVSVFTLTVLSA) threads the bilayer. Topologically, residues 143 to 162 (DRYRAIVKPLQLQTSDAVLK) are cytoplasmic. A helical transmembrane segment spans residues 163-183 (TCGKAVCVWIISMLLAAPEAV). Residues 184–219 (FSDLYEFGSSEKNTTFEACAPYPVSEKILQETHSLI) are Extracellular-facing. Residues 220 to 240 (CFLVFYIVPLSIISAYYFLIA) traverse the membrane as a helical segment. Over 241 to 271 (KTLYKSTFNMPAEEHTHARKQIESRKRVAKT) the chain is Cytoplasmic. The chain crosses the membrane as a helical span at residues 272-292 (VLVLVALFAVCWLPNHMLYLY). Residues 293–312 (RSFTYHSAVNSSAFHLSATI) are Extracellular-facing. Residues 313–332 (FARVLAFSNSCVNPFALYWL) traverse the membrane as a helical segment. At 333 to 392 (SRSFRQHFKKQVYCCKTEPPASQQSPTHSSTITGITAVKGNIQMSEISITLLSAYDVKKE) the chain is on the cytoplasmic side. Cysteine 346 carries the S-palmitoyl cysteine lipid modification.

The protein belongs to the G-protein coupled receptor 1 family. Expressed only in brain, primarily in cortex and forebrain and at low levels in the midbrain.

It is found in the cell membrane. Its function is as follows. The relative rank potency of bombesin-like peptides for this receptor is [Phe13]bombesin &gt; [Leu13]bombesin &gt; GRP &gt; neuromedin-B. This Bombina orientalis (Oriental fire-bellied toad) protein is [Phe13]-bombesin receptor (BB4).